A 129-amino-acid chain; its full sequence is Fluoride-specific ion channel FluC 1 (129 aa).

A run of 4 helical transmembrane segments spans residues 9–29, 33–53, 62–82, and 98–118; these read LSVGIFAFFGGGLRAYLNLIW, GTLTANIIGCFLLAFFTYFFV, LVTGLSTGFVGSFTTFSSFNL, and IYFFSSIFIGFLFAYLGMLVG. 2 residues coordinate Na(+): glycine 72 and threonine 75.

The protein belongs to the fluoride channel Fluc/FEX (TC 1.A.43) family.

It localises to the cell membrane. It catalyses the reaction fluoride(in) = fluoride(out). Na(+) is not transported, but it plays an essential structural role and its presence is essential for fluoride channel function. In terms of biological role, fluoride-specific ion channel. Important for reducing fluoride concentration in the cell, thus reducing its toxicity. The protein is Fluoride-specific ion channel FluC 1 of Lactobacillus johnsonii (strain CNCM I-12250 / La1 / NCC 533).